The chain runs to 181 residues: Protein Syd (181 aa).

The protein belongs to the Syd family.

It is found in the cell inner membrane. Functionally, interacts with the SecY protein in vivo. May bind preferentially to an uncomplexed state of SecY, thus functioning either as a chelating agent for excess SecY in the cell or as a regulatory factor that negatively controls the translocase function. The sequence is that of Protein Syd from Escherichia coli O81 (strain ED1a).